Consider the following 155-residue polypeptide: Interleukin-2 (155 aa).

The N-terminal stretch at 1–20 (MYKIQLLSCIALTLALVANG) is a signal peptide. An O-linked (GalNAc...) threonine glycan is attached at Thr-23. An intrachain disulfide couples Cys-79 to Cys-127.

Belongs to the IL-2 family.

The protein localises to the secreted. Cytokine produced by activated CD4-positive helper T-cells and to a lesser extend activated CD8-positive T-cells and natural killer (NK) cells that plays pivotal roles in the immune response and tolerance. Binds to a receptor complex composed of either the high-affinity trimeric IL-2R (IL2RA/CD25, IL2RB/CD122 and IL2RG/CD132) or the low-affinity dimeric IL-2R (IL2RB and IL2RG). Interaction with the receptor leads to oligomerization and conformation changes in the IL-2R subunits resulting in downstream signaling starting with phosphorylation of JAK1 and JAK3. In turn, JAK1 and JAK3 phosphorylate the receptor to form a docking site leading to the phosphorylation of several substrates including STAT5. This process leads to activation of several pathways including STAT, phosphoinositide-3-kinase/PI3K and mitogen-activated protein kinase/MAPK pathways. Functions as a T-cell growth factor and can increase NK-cell cytolytic activity as well. Promotes strong proliferation of activated B-cells and subsequently immunoglobulin production. Plays a pivotal role in regulating the adaptive immune system by controlling the survival and proliferation of regulatory T-cells, which are required for the maintenance of immune tolerance. Moreover, participates in the differentiation and homeostasis of effector T-cell subsets, including Th1, Th2, Th17 as well as memory CD8-positive T-cells. This chain is Interleukin-2 (IL2), found in Bubalus bubalis (Domestic water buffalo).